We begin with the raw amino-acid sequence, 404 residues long: uncharacterized protein (404 aa).

The protein belongs to the lymphocryptovirus BTRF1 family.

This is an uncharacterized protein from Homo sapiens (Human).